Reading from the N-terminus, the 257-residue chain is Triosephosphate isomerase (257 aa).

9–11 contacts substrate; the sequence is NWK. Histidine 95 acts as the Electrophile in catalysis. The active-site Proton acceptor is the glutamate 168. Residues glycine 174, serine 213, and 234–235 contribute to the substrate site; that span reads GG.

The protein belongs to the triosephosphate isomerase family. As to quaternary structure, homodimer.

It is found in the cytoplasm. It catalyses the reaction D-glyceraldehyde 3-phosphate = dihydroxyacetone phosphate. It participates in carbohydrate biosynthesis; gluconeogenesis. Its pathway is carbohydrate degradation; glycolysis; D-glyceraldehyde 3-phosphate from glycerone phosphate: step 1/1. Its function is as follows. Involved in the gluconeogenesis. Catalyzes stereospecifically the conversion of dihydroxyacetone phosphate (DHAP) to D-glyceraldehyde-3-phosphate (G3P). The chain is Triosephosphate isomerase from Acidithiobacillus ferrooxidans (strain ATCC 23270 / DSM 14882 / CIP 104768 / NCIMB 8455) (Ferrobacillus ferrooxidans (strain ATCC 23270)).